The following is a 216-amino-acid chain: MENQLLVRRLGRQDYTPVWQAMHQFTDQRDSTTRDEVWLVEHNPVFTQGQAGKAEHLLNTGDIPVVQSDRGGQVTYHGPGQLVAYFLIDLRRKKLGVRELVTHIENLVIHTLKHYQIESAARPDAPGVYVKNRKICSLGLRIRKGCSFHGLALNIQMDLAPFLRINPCGYAGMEMIQVSDLHPVSMEQVEKVLIQELVTLLDYEQVEFSTEAYNHE.

The 175-residue stretch at 31 to 205 (STTRDEVWLV…ELVTLLDYEQ (175 aa)) folds into the BPL/LPL catalytic domain. Substrate is bound by residues 70 to 77 (RGGQVTYH), 137 to 139 (SLG), and 150 to 152 (GLA). The active-site Acyl-thioester intermediate is Cys168.

Belongs to the LipB family.

It localises to the cytoplasm. It catalyses the reaction octanoyl-[ACP] + L-lysyl-[protein] = N(6)-octanoyl-L-lysyl-[protein] + holo-[ACP] + H(+). The protein operates within protein modification; protein lipoylation via endogenous pathway; protein N(6)-(lipoyl)lysine from octanoyl-[acyl-carrier-protein]: step 1/2. Catalyzes the transfer of endogenously produced octanoic acid from octanoyl-acyl-carrier-protein onto the lipoyl domains of lipoate-dependent enzymes. Lipoyl-ACP can also act as a substrate although octanoyl-ACP is likely to be the physiological substrate. In Vibrio cholerae serotype O1 (strain ATCC 39315 / El Tor Inaba N16961), this protein is Octanoyltransferase.